We begin with the raw amino-acid sequence, 338 residues long: Nucleoid-associated protein HI_0839 (338 aa).

This sequence belongs to the YejK family.

Its subcellular location is the cytoplasm. It is found in the nucleoid. The polypeptide is Nucleoid-associated protein HI_0839 (Haemophilus influenzae (strain ATCC 51907 / DSM 11121 / KW20 / Rd)).